We begin with the raw amino-acid sequence, 57 residues long: Large ribosomal subunit protein bL32 (57 aa).

Residues 1-38 (MAVQQNKPTRSKRGMRRSHDALTAVTSLSVDKTSGEKH) form a disordered region.

This sequence belongs to the bacterial ribosomal protein bL32 family.

In Escherichia coli O7:K1 (strain IAI39 / ExPEC), this protein is Large ribosomal subunit protein bL32.